A 180-amino-acid chain; its full sequence is Pro-glucagon (180 aa).

The first 20 residues, 1-20 (MKNIYIVAGFFVVLVQGSWQ), serve as a signal peptide directing secretion. The tract at residues 25–59 (DTEEKSRSFPASQTDPLEDPDQINEDKRHSQGTFT) is disordered. Phosphoserine is present on serine 54. The propeptide occupies 84–89 (NRNNIA). 2 positions are modified to phosphoserine: serine 105 and serine 108. Arginine 127 is modified (arginine amide). Positions 131-145 (DFPEEVTIVEELGRR) are excised as a propeptide. Residues serine 150 and serine 152 each carry the phosphoserine modification.

This sequence belongs to the glucagon family. Post-translationally, proglucagon is post-translationally processed in a tissue-specific manner in pancreatic A cells and intestinal L cells. In pancreatic A cells, the major bioactive hormone is glucagon cleaved by PCSK2/PC2. In the intestinal L cells PCSK1/PC1 liberates GLP-1, GLP-2, glicentin and oxyntomodulin. GLP-1 is further N-terminally truncated by post-translational processing in the intestinal L cells resulting in GLP-1(7-37) GLP-1-(7-36)amide. The C-terminal amidation is neither important for the metabolism of GLP-1 nor for its effects on the endocrine pancreas.

Its subcellular location is the secreted. Functionally, plays a key role in glucose metabolism and homeostasis. Regulates blood glucose by increasing gluconeogenesis and decreasing glycolysis. A counterregulatory hormone of insulin, raises plasma glucose levels in response to insulin-induced hypoglycemia. Plays an important role in initiating and maintaining hyperglycemic conditions in diabetes. Its function is as follows. Potent stimulator of glucose-dependent insulin release. Also stimulates insulin release in response to IL6. Plays important roles on gastric motility and the suppression of plasma glucagon levels. May be involved in the suppression of satiety and stimulation of glucose disposal in peripheral tissues, independent of the actions of insulin. Has growth-promoting activities on intestinal epithelium. May also regulate the hypothalamic pituitary axis (HPA) via effects on LH, TSH, CRH, oxytocin, and vasopressin secretion. Increases islet mass through stimulation of islet neogenesis and pancreatic beta cell proliferation. Inhibits beta cell apoptosis. Stimulates intestinal growth and up-regulates villus height in the small intestine, concomitant with increased crypt cell proliferation and decreased enterocyte apoptosis. The gastrointestinal tract, from the stomach to the colon is the principal target for GLP-2 action. Plays a key role in nutrient homeostasis, enhancing nutrient assimilation through enhanced gastrointestinal function, as well as increasing nutrient disposal. Stimulates intestinal glucose transport and decreases mucosal permeability. In terms of biological role, significantly reduces food intake. Inhibits gastric emptying in humans. Suppression of gastric emptying may lead to increased gastric distension, which may contribute to satiety by causing a sensation of fullness. Functionally, may modulate gastric acid secretion and the gastro-pyloro-duodenal activity. May play an important role in intestinal mucosal growth in the early period of life. This Mesocricetus auratus (Golden hamster) protein is Pro-glucagon (GCG).